The chain runs to 352 residues: Phosphoribosylformylglycinamidine cyclo-ligase (352 aa).

It belongs to the AIR synthase family.

It is found in the cytoplasm. The catalysed reaction is 2-formamido-N(1)-(5-O-phospho-beta-D-ribosyl)acetamidine + ATP = 5-amino-1-(5-phospho-beta-D-ribosyl)imidazole + ADP + phosphate + H(+). It functions in the pathway purine metabolism; IMP biosynthesis via de novo pathway; 5-amino-1-(5-phospho-D-ribosyl)imidazole from N(2)-formyl-N(1)-(5-phospho-D-ribosyl)glycinamide: step 2/2. This Ectopseudomonas mendocina (strain ymp) (Pseudomonas mendocina) protein is Phosphoribosylformylglycinamidine cyclo-ligase.